The sequence spans 261 residues: Thiazole synthase (261 aa).

The active-site Schiff-base intermediate with DXP is Lys101. 1-deoxy-D-xylulose 5-phosphate is bound by residues Gly162, 188 to 189, and 210 to 211; these read AG and NT.

It belongs to the ThiG family. In terms of assembly, homotetramer. Forms heterodimers with either ThiH or ThiS.

Its subcellular location is the cytoplasm. It carries out the reaction [ThiS sulfur-carrier protein]-C-terminal-Gly-aminoethanethioate + 2-iminoacetate + 1-deoxy-D-xylulose 5-phosphate = [ThiS sulfur-carrier protein]-C-terminal Gly-Gly + 2-[(2R,5Z)-2-carboxy-4-methylthiazol-5(2H)-ylidene]ethyl phosphate + 2 H2O + H(+). It participates in cofactor biosynthesis; thiamine diphosphate biosynthesis. In terms of biological role, catalyzes the rearrangement of 1-deoxy-D-xylulose 5-phosphate (DXP) to produce the thiazole phosphate moiety of thiamine. Sulfur is provided by the thiocarboxylate moiety of the carrier protein ThiS. In vitro, sulfur can be provided by H(2)S. The polypeptide is Thiazole synthase (Azoarcus sp. (strain BH72)).